We begin with the raw amino-acid sequence, 75 residues long: Disintegrin CTF-II (75 aa).

Residues 1-75 enclose the Disintegrin domain; that stretch reads ELLEEGEDCY…SDDCPRWNDL (75 aa). 6 disulfide bridges follow: Cys9–Cys24, Cys11–Cys19, Cys18–Cys41, Cys32–Cys38, Cys37–Cys62, and Cys50–Cys69. Residues 54–56 carry the Cell attachment site motif; the sequence is RGD.

This sequence belongs to the venom metalloproteinase (M12B) family. P-II subfamily. P-IIa sub-subfamily. In terms of assembly, monomer (disintegrin). Expressed by the venom gland.

Its subcellular location is the secreted. In terms of biological role, inhibits fibrinogen interaction with platelet receptors, and inhibits aggregation induced by ADP, thrombin, collagen and platelet-activating factor. Acts by binding to the alpha-IIb/beta-3 (ITGA2B/ITGB3) on the platelet surface. The chain is Disintegrin CTF-II from Protobothrops flavoviridis (Habu).